Consider the following 378-residue polypeptide: Putative glutamate--cysteine ligase 2 (378 aa).

Belongs to the glutamate--cysteine ligase type 2 family. YbdK subfamily.

It carries out the reaction L-cysteine + L-glutamate + ATP = gamma-L-glutamyl-L-cysteine + ADP + phosphate + H(+). ATP-dependent carboxylate-amine ligase which exhibits weak glutamate--cysteine ligase activity. This chain is Putative glutamate--cysteine ligase 2, found in Leifsonia xyli subsp. xyli (strain CTCB07).